The chain runs to 132 residues: Small ribosomal subunit protein uS11c (132 aa).

It belongs to the universal ribosomal protein uS11 family. In terms of assembly, part of the 30S ribosomal subunit.

The protein localises to the plastid. It is found in the chloroplast. This is Small ribosomal subunit protein uS11c from Cryptomeria japonica (Japanese cedar).